The chain runs to 175 residues: Cytochrome c homolog (175 aa).

Over 1 to 8 (MTGKELNK) the chain is Cytoplasmic. The helical; Signal-anchor transmembrane segment at 9–29 (IVAAILFASLIAMIVGFIANI) threads the bilayer. The Periplasmic segment spans residues 30 to 175 (LYKPNLHVLH…LFLKNYVHDQ (146 aa)). Positions 84, 87, 88, and 150 each coordinate heme c.

This sequence belongs to the cytochrome c family. Post-translationally, binds 1 heme c group covalently per subunit.

The protein resides in the cell membrane. Functionally, may be involved in electron transfer from bc1 complex to aa3. The sequence is that of Cytochrome c homolog (cycM) from Rickettsia prowazekii (strain Madrid E).